The following is a 624-amino-acid chain: MNLEQLYDVIVVGGGHAGTEAALAAARLGVKTLLLTHNIDLLGQMSCNPAIGGIGKGHLVKEIDALDGAMAKAADQAGIQFRILNASKGPAVRATRAQADRVLYRKAIRTQLQSQANLTIFQQAVDDLKIEGGLVTGVVTQMGLTLKARAVVLTVGTFLGGKIHVGMNQYAGGRAGDPPSIALSKSLRDLDLPVGRLKTGTPPRIDRRTIDFSQMVEQPGDTPVPVFSYLGTASDHPQQVPCHITHTTEATHDIIRNNLDKSPMYAGVIEGVGPRYCPSIEDKIVRFADKTSHQIFVEPEGLTTEEIYPNGISTSLPFEVQVQFVRTIKGFENAHITRPGYAIEYDYFDPRGLTSFLQTKAIPNLFFAGQINGTTGYEEAAAQGIIAGMNAALQIKDQELWCPRRDEAYIGVLIDDLITCGTQEPYRMFTSRAEYRLLLREDNADLRLTEKGRQLGLVGDERWDSFSKKREAIESTQALLHNSWVRVHHNDLFKEALLNPMQHDCRAAEFLKRPEINYQHLLMMDDLNLPELPQEITEQIEIQNKYAGYIDRQQQEIEKLRKHENTMLPETLDYNDVVGLSSEVIQKLNRIKPTSLAQAGRISGVTPAALSLLLVHLKKSRLPV.

FAD contacts are provided by residues 13 to 18, Val-125, and Ser-180; that span reads GGGHAG. 273–287 serves as a coordination point for NAD(+); it reads GPRYCPSIEDKIVRF. FAD is bound at residue Gln-370.

The protein belongs to the MnmG family. In terms of assembly, homodimer. Heterotetramer of two MnmE and two MnmG subunits. Requires FAD as cofactor.

It is found in the cytoplasm. NAD-binding protein involved in the addition of a carboxymethylaminomethyl (cmnm) group at the wobble position (U34) of certain tRNAs, forming tRNA-cmnm(5)s(2)U34. This chain is tRNA uridine 5-carboxymethylaminomethyl modification enzyme MnmG, found in Legionella pneumophila (strain Corby).